A 425-amino-acid polypeptide reads, in one-letter code: Serine--tRNA ligase (425 aa).

L-serine is bound at residue 231–233 (TAE). 262-264 (RSE) serves as a coordination point for ATP. Position 285 (glutamate 285) interacts with L-serine. 349 to 352 (EISS) contributes to the ATP binding site. Serine 385 contacts L-serine.

Belongs to the class-II aminoacyl-tRNA synthetase family. Type-1 seryl-tRNA synthetase subfamily. As to quaternary structure, homodimer. The tRNA molecule binds across the dimer.

It localises to the cytoplasm. It catalyses the reaction tRNA(Ser) + L-serine + ATP = L-seryl-tRNA(Ser) + AMP + diphosphate + H(+). The catalysed reaction is tRNA(Sec) + L-serine + ATP = L-seryl-tRNA(Sec) + AMP + diphosphate + H(+). It functions in the pathway aminoacyl-tRNA biosynthesis; selenocysteinyl-tRNA(Sec) biosynthesis; L-seryl-tRNA(Sec) from L-serine and tRNA(Sec): step 1/1. Catalyzes the attachment of serine to tRNA(Ser). Is also able to aminoacylate tRNA(Sec) with serine, to form the misacylated tRNA L-seryl-tRNA(Sec), which will be further converted into selenocysteinyl-tRNA(Sec). The sequence is that of Serine--tRNA ligase from Bartonella quintana (strain Toulouse) (Rochalimaea quintana).